The primary structure comprises 117 residues: UPF0231 protein HI_1724 (117 aa).

This sequence belongs to the UPF0231 family.

The sequence is that of UPF0231 protein HI_1724 from Haemophilus influenzae (strain ATCC 51907 / DSM 11121 / KW20 / Rd).